Here is a 712-residue protein sequence, read N- to C-terminus: Rap1 GTPase-activating protein 2 (712 aa).

Residues 1-33 form a disordered region; the sequence is MLAGLKVKKQELANSSDVTLPDRPLSPPLTAPP. Position 26 is a phosphoserine (Ser26). A Phosphothreonine modification is found at Thr30. The 217-residue stretch at 229 to 445 folds into the Rap-GAP domain; sequence IVSYDEHDVN…RTRAALLDNL (217 aa). A phosphoserine mark is found at Ser488, Ser495, Ser525, Ser539, Ser545, Ser593, and Ser594. The disordered stretch occupies residues 529–712; the sequence is AAATAKNQSR…LSHASSSAGH (184 aa). Polar residues predominate over residues 566 to 594; the sequence is DSASSTPKTPDGGHSSQEIKSETSSNPSS. The span at 599–612 shows a compositional bias: basic and acidic residues; sequence PNKEKPFIKLKENG. Over residues 617–629 the composition is skewed to low complexity; that stretch reads SRSSSSTSSFSST. Polar residues predominate over residues 641 to 652; it reads SGSSQPSTTSPF. Residues 660-669 show a composition bias toward low complexity; sequence SPSPSSESPS. Residues 681 to 694 are compositionally biased toward polar residues; that stretch reads RSPTDAKSRNSPRS.

The protein localises to the cytoplasm. In terms of biological role, GTPase activator for the nuclear Ras-related regulatory protein RAP-1A (KREV-1), converting it to the putatively inactive GDP-bound state. The protein is Rap1 GTPase-activating protein 2 (Rap1gap2) of Mus musculus (Mouse).